The primary structure comprises 657 residues: Protein PSK SIMULATOR 1 (657 aa).

4 stretches are compositionally biased toward polar residues: residues 1 to 15, 26 to 39, 62 to 76, and 540 to 556; these read MGGL…NNAP, HLNN…SHSG, ESFS…SHPQ, and RSPN…SHNP. Disordered stretches follow at residues 1-80 and 534-559; these read MGGL…NIED and PVKS…PSMG. Residue glycine 2 is the site of N-myristoyl glycine attachment.

Its subcellular location is the nucleus. Functionally, promotes seedling growth probably via the regulation of phytosulfokine (PSK) signaling; PSK are peptide phytohormones acting as growth factors. Together with PSI2 and PSI3, required during vegetative growth and reproduction. May also have a function in carbohydrate metabolism. This Arabidopsis thaliana (Mouse-ear cress) protein is Protein PSK SIMULATOR 1.